A 398-amino-acid chain; its full sequence is tRNA(Ile)-lysidine synthase (398 aa).

25–30 (SGGVDS) contributes to the ATP binding site.

The protein belongs to the tRNA(Ile)-lysidine synthase family.

It is found in the cytoplasm. It catalyses the reaction cytidine(34) in tRNA(Ile2) + L-lysine + ATP = lysidine(34) in tRNA(Ile2) + AMP + diphosphate + H(+). Ligates lysine onto the cytidine present at position 34 of the AUA codon-specific tRNA(Ile) that contains the anticodon CAU, in an ATP-dependent manner. Cytidine is converted to lysidine, thus changing the amino acid specificity of the tRNA from methionine to isoleucine. The protein is tRNA(Ile)-lysidine synthase of Francisella tularensis subsp. novicida (strain U112).